The sequence spans 204 residues: Probable nicotinate-nucleotide adenylyltransferase (204 aa).

Belongs to the NadD family.

It catalyses the reaction nicotinate beta-D-ribonucleotide + ATP + H(+) = deamido-NAD(+) + diphosphate. The protein operates within cofactor biosynthesis; NAD(+) biosynthesis; deamido-NAD(+) from nicotinate D-ribonucleotide: step 1/1. In terms of biological role, catalyzes the reversible adenylation of nicotinate mononucleotide (NaMN) to nicotinic acid adenine dinucleotide (NaAD). The protein is Probable nicotinate-nucleotide adenylyltransferase of Methylacidiphilum infernorum (isolate V4) (Methylokorus infernorum (strain V4)).